Consider the following 315-residue polypeptide: Atrochrysone carboxyl ACP thioesterase (315 aa).

4 residues coordinate Zn(2+): H95, H97, D99, and H100. D99 serves as the catalytic Proton donor/acceptor.

This sequence belongs to the metallo-beta-lactamase superfamily. It depends on Zn(2+) as a cofactor. As to expression, endocrocin is specifically produced in conidia.

The catalysed reaction is atrochrysone carboxyl-[ACP] + H2O = atrochrysone carboxylate + holo-[ACP] + H(+). In terms of biological role, atrochrysone carboxyl ACP thioesterase; part of the gene cluster that mediates the biosynthesis of endocrocin, a simple anthraquinone interesting for many biotechnological applications. The pathway begins with the synthesis of atrochrysone thioester by the polyketide synthase (PKS) encA. The atrochrysone carboxyl ACP thioesterase encB then breaks the thioester bond and releases the atrochrysone carboxylic acid from encA. The atrochrysone carboxylic acid is then converted to endocrocin anthrone which is further oxidized into endocrocin by the anthrone oxygenase encC. The exact function of encD has not been identified yet, but it negatively regulates endocrocin production, likely through the modification of endocrocin itself. This chain is Atrochrysone carboxyl ACP thioesterase, found in Aspergillus fumigatus (strain ATCC MYA-4609 / CBS 101355 / FGSC A1100 / Af293) (Neosartorya fumigata).